Here is a 262-residue protein sequence, read N- to C-terminus: Small ribosomal subunit protein uS2 (262 aa).

Residues 240–262 (NLDEKEESQEAESTEENTTVESN) are disordered. Residues 243–254 (EKEESQEAESTE) are compositionally biased toward acidic residues.

The protein belongs to the universal ribosomal protein uS2 family.

The chain is Small ribosomal subunit protein uS2 from Staphylococcus haemolyticus (strain JCSC1435).